A 293-amino-acid polypeptide reads, in one-letter code: DDRGK domain-containing protein 1 (293 aa).

The Lumenal portion of the chain corresponds to 1–6 (MWGPLI). A helical membrane pass occupies residues 7–27 (YALLGLAIVAAAFLFVRRSQA). The Cytoplasmic segment spans residues 28–293 (KEVVPVADDD…PADVDETTTA (266 aa)). Disordered regions lie at residues 30-151 (VVPV…RQKE) and 273-293 (TDVE…TTTA). Basic and acidic residues-rich tracts occupy residues 90 to 126 (KLQE…KERE) and 133 to 151 (ERQR…RQKE).

Belongs to the DDRGK1 family.

The protein resides in the endoplasmic reticulum membrane. Its function is as follows. Substrate adapter for ufmylation, the covalent attachment of the ubiquitin-like modifier UFM1 to substrate proteins. This chain is DDRGK domain-containing protein 1, found in Monosiga brevicollis (Choanoflagellate).